A 428-amino-acid polypeptide reads, in one-letter code: MSSNNEILFARAQKSTPGGVNSPVRAFRSVGGTPRFITRAEGPYFWDADDRRYIDYIGSWGPAIVGHAHPDVVKAVQDAATRGLSFGAPTEGEIRMAELICQLVPSIEQVRLVSSGTEAAMSALRLARGATGRDTIIKFEGCYHGHADSLLVKAGSGLLTFGNPTSAGVPEDFAKHTLVLDYNNPQQLEDTFKEIGNQIACVIVEPVAGNMNLLPATPEFLQTMRRVCTQYGAVLIFDEVMSGFRVALGGAQSMYDIKPDLTVLGKVIGGGLPVAAFGGRTDLMQHLAPLGGVYQAGTLSGNPVTVAAGLATLKLIQVPGFYESLATQTGKLVAGLSAAARAANIAFSANSVGGMFGMYFAAEKPQSYTEMMKCDVAHFNTFFHAMLDAGVYLAPSAFEAGFVSAQHDDAIIEASIQAARQAFAQLGQ.

Lys266 bears the N6-(pyridoxal phosphate)lysine mark.

It belongs to the class-III pyridoxal-phosphate-dependent aminotransferase family. HemL subfamily. Homodimer. The cofactor is pyridoxal 5'-phosphate.

It is found in the cytoplasm. The enzyme catalyses (S)-4-amino-5-oxopentanoate = 5-aminolevulinate. The protein operates within porphyrin-containing compound metabolism; protoporphyrin-IX biosynthesis; 5-aminolevulinate from L-glutamyl-tRNA(Glu): step 2/2. This is Glutamate-1-semialdehyde 2,1-aminomutase from Herminiimonas arsenicoxydans.